Consider the following 317-residue polypeptide: Beta-ketoacyl-[acyl-carrier-protein] synthase III (317 aa).

Residues Cys112 and His244 contribute to the active site. An ACP-binding region spans residues 245–249 (QANLR). Asn274 is an active-site residue.

Belongs to the thiolase-like superfamily. FabH family. In terms of assembly, homodimer.

Its subcellular location is the cytoplasm. The enzyme catalyses malonyl-[ACP] + acetyl-CoA + H(+) = 3-oxobutanoyl-[ACP] + CO2 + CoA. It participates in lipid metabolism; fatty acid biosynthesis. Its function is as follows. Catalyzes the condensation reaction of fatty acid synthesis by the addition to an acyl acceptor of two carbons from malonyl-ACP. Catalyzes the first condensation reaction which initiates fatty acid synthesis and may therefore play a role in governing the total rate of fatty acid production. Possesses both acetoacetyl-ACP synthase and acetyl transacylase activities. Its substrate specificity determines the biosynthesis of branched-chain and/or straight-chain of fatty acids. In Citrobacter koseri (strain ATCC BAA-895 / CDC 4225-83 / SGSC4696), this protein is Beta-ketoacyl-[acyl-carrier-protein] synthase III.